A 125-amino-acid polypeptide reads, in one-letter code: Phosphoribosyl-AMP cyclohydrolase (125 aa).

Aspartate 74 provides a ligand contact to Mg(2+). Cysteine 75 lines the Zn(2+) pocket. Residues aspartate 76 and aspartate 78 each contribute to the Mg(2+) site. The Zn(2+) site is built by cysteine 92 and cysteine 99.

Belongs to the PRA-CH family. Homodimer. The cofactor is Mg(2+). Zn(2+) serves as cofactor.

It is found in the cytoplasm. The catalysed reaction is 1-(5-phospho-beta-D-ribosyl)-5'-AMP + H2O = 1-(5-phospho-beta-D-ribosyl)-5-[(5-phospho-beta-D-ribosylamino)methylideneamino]imidazole-4-carboxamide. It participates in amino-acid biosynthesis; L-histidine biosynthesis; L-histidine from 5-phospho-alpha-D-ribose 1-diphosphate: step 3/9. Functionally, catalyzes the hydrolysis of the adenine ring of phosphoribosyl-AMP. This chain is Phosphoribosyl-AMP cyclohydrolase, found in Citrifermentans bemidjiense (strain ATCC BAA-1014 / DSM 16622 / JCM 12645 / Bem) (Geobacter bemidjiensis).